A 418-amino-acid polypeptide reads, in one-letter code: Deubiquitinase and deneddylase Dub1 (418 aa).

Residues 1 to 10 (MLSPTNSISK) are compositionally biased toward polar residues. The disordered stretch occupies residues 1 to 23 (MLSPTNSISKTAPVPPQDSSKPV). Residues 40-60 (TALAVLLVVVTLGLILLFYSF) form a helical membrane-spanning segment. Residues 72–144 (TRPSTKEQPT…PLPPKAPKPV (73 aa)) form a disordered region. Pro residues predominate over residues 86-141 (VPLPSPPLAVPRPSTPPPPVISRPSTPPAPTPAISPPSTPSAPKPSTPPPLPPKAP). Catalysis depends on residues H288, D305, and C358.

The protein belongs to the peptidase C48 family.

The protein resides in the secreted. It is found in the host cell. Its subcellular location is the membrane. Functionally, effector proteins function to alter host cell physiology and promote bacterial survival in host tissues. This protease possesses deubiquitinating and deneddylating activities. This chain is Deubiquitinase and deneddylase Dub1 (cdu1), found in Chlamydia trachomatis serovar B (strain TZ1A828/OT).